The following is a 498-amino-acid chain: Envelop protein OPG153 (498 aa).

C43 and C342 are disulfide-bonded. The disordered stretch occupies residues 352 to 391 (ATDTGHHQDSKINIKDDDVDDDDYNPKPTPIPEPYPRPPF). Positions 355 to 367 (TGHHQDSKINIKD) are enriched in basic and acidic residues. Over residues 378-390 (KPTPIPEPYPRPP) the composition is skewed to pro residues.

This sequence belongs to the orthopoxvirus OPG153 protein family. Interacts with proteins OPG094 and OPG143. Interacts with OPG154. Interacts with OPG152. Interacts with host laminin.

The protein resides in the virion membrane. Its function is as follows. Envelop protein that mediates acid-dependent endocytosis into host cells. Plays an important role in endocytic entry of the virus by acting as an acid-sensitive membrane fusion suppressor. Low pH in host endosomes triggers conformational changes to allow de-repression of viral fusion complex activity and membrane fusion within vesicles. Also plays a role in bridging the mature virion with structural protein OPG152. This Variola virus (isolate Human/India/Ind3/1967) (VARV) protein is Envelop protein OPG153 (Protein OPG153).